Here is a 181-residue protein sequence, read N- to C-terminus: Oligoribonuclease (181 aa).

The region spanning 8-171 (LIWLDMEMTG…ADILESIEEM (164 aa)) is the Exonuclease domain. The active site involves tyrosine 129.

This sequence belongs to the oligoribonuclease family.

It localises to the cytoplasm. 3'-to-5' exoribonuclease specific for small oligoribonucleotides. This chain is Oligoribonuclease, found in Chromobacterium violaceum (strain ATCC 12472 / DSM 30191 / JCM 1249 / CCUG 213 / NBRC 12614 / NCIMB 9131 / NCTC 9757 / MK).